Here is a 94-residue protein sequence, read N- to C-terminus: Co-chaperonin GroES (94 aa).

Belongs to the GroES chaperonin family. Heptamer of 7 subunits arranged in a ring. Interacts with the chaperonin GroEL.

Its subcellular location is the cytoplasm. Functionally, together with the chaperonin GroEL, plays an essential role in assisting protein folding. The GroEL-GroES system forms a nano-cage that allows encapsulation of the non-native substrate proteins and provides a physical environment optimized to promote and accelerate protein folding. GroES binds to the apical surface of the GroEL ring, thereby capping the opening of the GroEL channel. The polypeptide is Co-chaperonin GroES (Heliobacterium modesticaldum (strain ATCC 51547 / Ice1)).